The following is a 1127-amino-acid chain: Inactive phospholipase C-like protein 2 (1127 aa).

Residues methionine 1–glycine 11 are compositionally biased toward gly residues. A disordered region spans residues methionine 1 to proline 128. Alanine 2 bears the N-acetylalanine mark. Position 17 is a phosphoserine (serine 17). Positions glycine 19–glycine 31 are enriched in low complexity. Over residues valine 32–leucine 42 the composition is skewed to gly residues. A Phosphothreonine modification is found at threonine 84. The PH domain maps to asparagine 141–serine 251. Residues glutamine 426–lysine 570 form the PI-PLC X-box domain. Threonine 584 is subject to Phosphothreonine. Positions leucine 618 to arginine 734 constitute a PI-PLC Y-box domain. In terms of domain architecture, C2 spans arginine 734–serine 863. Residues glycine 1101–glutamate 1127 form a disordered region. Basic and acidic residues predominate over residues aspartate 1106 to glutamate 1127. At serine 1113 the chain carries Phosphoserine.

It is found in the cytoplasm. Functionally, may play an role in the regulation of Ins(1,4,5)P3 around the endoplasmic reticulum. This is Inactive phospholipase C-like protein 2 (PLCL2) from Homo sapiens (Human).